The sequence spans 275 residues: Lycopene elongase/hydratase (275 aa).

A run of 9 helical transmembrane segments spans residues 13–33, 38–58, 84–104, 107–127, 134–154, 160–180, 203–223, 225–245, and 253–273; these read FWLY…TTVG, APAV…LYGI, AAVA…AAPL, EAWP…APPL, VLDS…YAGV, PLLA…FSAI, ALAY…LVDV, FGLL…LQVA, and YPAV…WGVV.

It belongs to the UbiA prenyltransferase family.

It localises to the cell membrane. It carries out the reaction all-trans-lycopene + dimethylallyl diphosphate + H2O = dihydroisopentenyldehydrorhodopin + diphosphate. The catalysed reaction is isopentenyldehydrorhodopin + dimethylallyl diphosphate + H2O = dihydrobisanhydrobacterioruberin + diphosphate. It participates in carotenoid biosynthesis. With respect to regulation, inhibited by bacterioopsin. Functionally, involved in the biosynthesis of the acyclic C50 carotenoid bacterioruberin (BR). Acts as a bifunctional elongase/hydratase that catalyzes the elongation of lycopene by attaching a C(5) isoprene unit at C-2, as well as the hydroxylation of the previous end of the molecule. The enzyme acts at both ends of the substrate, and catalyzes the conversion of lycopene to the C(45) intermediate dihydroisopentenyldehydrorhodopin (DH-IDR) and the conversion of isopentenyldehydrorhodopin (IDR) to the C(50) carotenoid dihydrobisanhydrobacterioruberin (DH-BABR). Can also catalyze the conversion of lycopene to tetrahydrobisanhydrobacterioruberin (TH-BABR). The polypeptide is Lycopene elongase/hydratase (Halobacterium salinarum (strain ATCC 700922 / JCM 11081 / NRC-1) (Halobacterium halobium)).